The chain runs to 186 residues: Outer-membrane lipoprotein LolB (186 aa).

Residues 1-16 (MRRLAVIASLAWALGG) form the signal peptide. Residue Cys17 is the site of N-palmitoyl cysteine attachment. Cys17 is lipidated: S-diacylglycerol cysteine.

Belongs to the LolB family. In terms of assembly, monomer.

The protein resides in the cell outer membrane. Its function is as follows. Plays a critical role in the incorporation of lipoproteins in the outer membrane after they are released by the LolA protein. This chain is Outer-membrane lipoprotein LolB, found in Thiobacillus denitrificans (strain ATCC 25259 / T1).